Consider the following 87-residue polypeptide: MANTAQAKKRVRQTATRRERNFGLRSKLRTAIKGVRKAVAAGDKNVAEVVFRKAVSVIDSVASKGIIHKNKASRHKSRLSGAVKAMG.

The protein belongs to the bacterial ribosomal protein bS20 family.

Binds directly to 16S ribosomal RNA. In Nitrosomonas europaea (strain ATCC 19718 / CIP 103999 / KCTC 2705 / NBRC 14298), this protein is Small ribosomal subunit protein bS20.